Here is a 376-residue protein sequence, read N- to C-terminus: N-acetyldiaminopimelate deacetylase (376 aa).

Aspartate 69 is an active-site residue. Glutamate 128 (proton acceptor) is an active-site residue.

The protein belongs to the peptidase M20A family. N-acetyldiaminopimelate deacetylase subfamily.

It carries out the reaction N-acetyl-(2S,6S)-2,6-diaminopimelate + H2O = (2S,6S)-2,6-diaminopimelate + acetate. It participates in amino-acid biosynthesis; L-lysine biosynthesis via DAP pathway; LL-2,6-diaminopimelate from (S)-tetrahydrodipicolinate (acetylase route): step 3/3. Functionally, catalyzes the conversion of N-acetyl-diaminopimelate to diaminopimelate and acetate. This Bacillus thuringiensis subsp. konkukian (strain 97-27) protein is N-acetyldiaminopimelate deacetylase.